The primary structure comprises 993 residues: Ephrin type-B receptor 3 (993 aa).

An N-terminal signal peptide occupies residues 1–29 (MAGARPPPGLLPLLAPLLLPLLLPAGCWA). Residues 30–554 (LEETLMDTKW…AQQLQEQLPL (525 aa)) lie on the Extracellular side of the membrane. One can recognise an Eph LBD domain in the interval 31–209 (EETLMDTKWV…FYKKCASTTA (179 aa)). Cys73 and Cys191 form a disulfide bridge. Fibronectin type-III domains are found at residues 331 to 446 (VPSP…TNQA) and 447 to 540 (APSE…TTSE). N-linked (GlcNAc...) asparagine glycans are attached at residues Asn343 and Asn440. A helical transmembrane segment spans residues 555–575 (IVGSTVAGFVFMVVVVVIALV). Residues 576-993 (CLRKQRHGPD…QMNQTLPVQV (418 aa)) lie on the Cytoplasmic side of the membrane. Tyr609 carries the phosphotyrosine; by autocatalysis modification. In terms of domain architecture, Protein kinase spans 628–891 (VKIEEVIGAG…QIVNTLDKLI (264 aa)). Residues 634–642 (IGAGEFGEV) and Lys660 contribute to the ATP site. Catalysis depends on Asp753, which acts as the Proton acceptor. An SAM domain is found at 920–984 (TTFTTVGDWL…LCSIQDMRLQ (65 aa)). The PDZ-binding signature appears at 991 to 993 (VQV).

It belongs to the protein kinase superfamily. Tyr protein kinase family. Ephrin receptor subfamily. Heterotetramer upon binding of the ligand. The heterotetramer is composed of an ephrin dimer and a receptor dimer. Oligomerization is probably required to induce biological responses. Post-translationally, phosphorylated. Autophosphorylates upon ligand-binding. Autophosphorylation on Tyr-609 is required for interaction with SH2 domain-containing proteins. Ubiquitinated by RNF186, mainly through 'Lys-48' and 'Lys-63'-linked polyubiquitin chains. In terms of tissue distribution, expressed in cells of the retinal ganglion cell layer during retinal axon guidance to the optic disk. Expressed by Paneth and progenitor cells in the crypts of the intestinal epithelium (at protein level). Expressed in myogenic progenitor cells.

It is found in the cell membrane. The protein resides in the cell projection. The protein localises to the dendrite. It catalyses the reaction L-tyrosyl-[protein] + ATP = O-phospho-L-tyrosyl-[protein] + ADP + H(+). In terms of biological role, receptor tyrosine kinase which binds promiscuously transmembrane ephrin-B family ligands residing on adjacent cells, leading to contact-dependent bidirectional signaling into neighboring cells. The signaling pathway downstream of the receptor is referred to as forward signaling while the signaling pathway downstream of the ephrin ligand is referred to as reverse signaling. Generally has an overlapping and redundant function with EPHB2. Like EPHB2, functions in axon guidance during development regulating for instance the neurons forming the corpus callosum and the anterior commissure, 2 major interhemispheric connections between the temporal lobes of the cerebral cortex. In addition to its role in axon guidance also plays an important redundant role with other ephrin-B receptors in development and maturation of dendritic spines and the formation of excitatory synapses. Controls other aspects of development through regulation of cell migration and positioning. This includes angiogenesis, palate development and thymic epithelium development for instance. Forward and reverse signaling through the EFNB2/EPHB3 complex also regulate migration and adhesion of cells that tubularize the urethra and septate the cloaca. Finally, plays an important role in intestinal epithelium differentiation segregating progenitor from differentiated cells in the crypt. The sequence is that of Ephrin type-B receptor 3 (Ephb3) from Mus musculus (Mouse).